The chain runs to 600 residues: Glutamine--fructose-6-phosphate aminotransferase [isomerizing] (600 aa).

The active-site Nucleophile; for GATase activity is Cys2. Residues 2 to 217 (CGIVGYIGNE…DEELVIVRRD (216 aa)) enclose the Glutamine amidotransferase type-2 domain. SIS domains are found at residues 283 to 422 (IRAA…AAGK) and 452 to 590 (IARD…VDKP). The active-site For Fru-6P isomerization activity is Lys595.

In terms of assembly, homodimer.

The protein resides in the cytoplasm. The enzyme catalyses D-fructose 6-phosphate + L-glutamine = D-glucosamine 6-phosphate + L-glutamate. Its function is as follows. Catalyzes the first step in hexosamine metabolism, converting fructose-6P into glucosamine-6P using glutamine as a nitrogen source. The sequence is that of Glutamine--fructose-6-phosphate aminotransferase [isomerizing] from Shouchella clausii (strain KSM-K16) (Alkalihalobacillus clausii).